The sequence spans 596 residues: ATP-dependent lipid A-core flippase (596 aa).

Transmembrane regions (helical) follow at residues V34–I54, A80–L100, A138–V158, V164–I184, Q263–V283, and V292–L312. The ABC transmembrane type-1 domain occupies V38–R321. Positions I353–I589 constitute an ABC transporter domain. G389–T396 is an ATP binding site.

Belongs to the ABC transporter superfamily. Lipid exporter (TC 3.A.1.106) family. In terms of assembly, homodimer.

The protein resides in the cell inner membrane. It carries out the reaction ATP + H2O + lipid A-core oligosaccharideSide 1 = ADP + phosphate + lipid A-core oligosaccharideSide 2.. Involved in lipopolysaccharide (LPS) biosynthesis. Translocates lipid A-core from the inner to the outer leaflet of the inner membrane. Transmembrane domains (TMD) form a pore in the inner membrane and the ATP-binding domain (NBD) is responsible for energy generation. The chain is ATP-dependent lipid A-core flippase from Burkholderia thailandensis (strain ATCC 700388 / DSM 13276 / CCUG 48851 / CIP 106301 / E264).